The sequence spans 240 residues: 26.7 kDa heat shock protein, chloroplastic (240 aa).

The N-terminal 43 residues, 1–43 (MAAPFALVSRVSPAARLPIRAAWRRARPTVGLPSSGRARQLAV), are a transit peptide targeting the chloroplast. Residues 59-84 (HVNQDGGNQQGNAVQRRPRRSSALDG) are disordered. Residues 126 to 240 (LATGEVRMPW…ERKVIDVQVQ (115 aa)) form the sHSP domain.

This sequence belongs to the small heat shock protein (HSP20) family. May form oligomeric structures. Expressed in roots, stems, leaves, spikelets and embryos.

The protein resides in the plastid. It is found in the chloroplast. This is 26.7 kDa heat shock protein, chloroplastic (HSP26.7) from Oryza sativa subsp. japonica (Rice).